Here is a 253-residue protein sequence, read N- to C-terminus: MVSSFTSAPRSGFYYFAQGWKLVSQPGIRRFVILPLLVNILLMGGAFWWLFTQLDVWIPTLMSYVPDWLQWLSYLLWPLAVISVLLVFGYFFSTIANWIAAPFNGLLAEQLEARLTGATPPDTGIFGIMKDVPRIMKREWQKFAWYLPRAIVLLILYFIPGIGQTVAPVLWFLFSAWMLAIQYCDYPFDNHKVPFKEMRTALRTRKITNMQFGALTSLFTMIPLLNLFIMPVAVCGATAMWVDCYRDKHAMWR.

4 consecutive transmembrane segments (helical) span residues 31–51 (FVIL…WWLF), 75–95 (LLWP…FSTI), 151–171 (IVLL…PVLW), and 222–242 (IPLL…AMWV).

It belongs to the CysZ family.

Its subcellular location is the cell inner membrane. Its function is as follows. High affinity, high specificity proton-dependent sulfate transporter, which mediates sulfate uptake. Provides the sulfur source for the cysteine synthesis pathway. This is Sulfate transporter CysZ from Escherichia coli O127:H6 (strain E2348/69 / EPEC).